The primary structure comprises 267 residues: MTKKIVLQIAYQGTSYSGWQYQPNALSIQEVLKTILKKIAGFRISVISSGRTDAGVHAQGQIAHFHCPDHPHFTDPRQIQKMLNALLPHDIVIRDAVMTDGDFHSRFSAIAKEYRYTLSLLPKPLPHHRLFCFSPRYKLNIARMQEAAQYLVGTHDFASFANLGREYSSTIRTLYTLDLSEQEHLVTVICRGNGFLYKMVRNIVGALLDIGKGKYPPEHLLDMLATKDRRKGPPSAPPYGLSLHHVCYPPPYQWFCKHEHNNSSEGK.

Asp53 (nucleophile) is an active-site residue. Tyr114 contributes to the substrate binding site.

The protein belongs to the tRNA pseudouridine synthase TruA family. In terms of assembly, homodimer.

It catalyses the reaction uridine(38/39/40) in tRNA = pseudouridine(38/39/40) in tRNA. Functionally, formation of pseudouridine at positions 38, 39 and 40 in the anticodon stem and loop of transfer RNAs. The polypeptide is tRNA pseudouridine synthase A (Chlamydia trachomatis serovar L2b (strain UCH-1/proctitis)).